The primary structure comprises 372 residues: Queuine tRNA-ribosyltransferase (372 aa).

Aspartate 92 acts as the Proton acceptor in catalysis. Residues 92-96 (DSGGY), aspartate 146, glutamine 188, and glycine 215 contribute to the substrate site. Positions 246–252 (GIGSLKE) are RNA binding. Aspartate 265 functions as the Nucleophile in the catalytic mechanism. The RNA binding; important for wobble base 34 recognition stretch occupies residues 270–274 (TRLGR). Cysteine 303, cysteine 305, cysteine 308, and histidine 334 together coordinate Zn(2+).

This sequence belongs to the queuine tRNA-ribosyltransferase family. Homodimer. Within each dimer, one monomer is responsible for RNA recognition and catalysis, while the other monomer binds to the replacement base PreQ1. Zn(2+) serves as cofactor.

It carries out the reaction 7-aminomethyl-7-carbaguanine + guanosine(34) in tRNA = 7-aminomethyl-7-carbaguanosine(34) in tRNA + guanine. It functions in the pathway tRNA modification; tRNA-queuosine biosynthesis. Catalyzes the base-exchange of a guanine (G) residue with the queuine precursor 7-aminomethyl-7-deazaguanine (PreQ1) at position 34 (anticodon wobble position) in tRNAs with GU(N) anticodons (tRNA-Asp, -Asn, -His and -Tyr). Catalysis occurs through a double-displacement mechanism. The nucleophile active site attacks the C1' of nucleotide 34 to detach the guanine base from the RNA, forming a covalent enzyme-RNA intermediate. The proton acceptor active site deprotonates the incoming PreQ1, allowing a nucleophilic attack on the C1' of the ribose to form the product. After dissociation, two additional enzymatic reactions on the tRNA convert PreQ1 to queuine (Q), resulting in the hypermodified nucleoside queuosine (7-(((4,5-cis-dihydroxy-2-cyclopenten-1-yl)amino)methyl)-7-deazaguanosine). In Prochlorococcus marinus (strain MIT 9515), this protein is Queuine tRNA-ribosyltransferase.